The chain runs to 46 residues: Esculentin-1HSa (46 aa).

Cys40 and Cys46 are disulfide-bonded.

As to expression, expressed by the skin glands.

The protein localises to the secreted. Has antibacterial activity against the Gram-positive bacterium S.aureus ATCC 25923 (MIC=12 uM) and the Gram-negative bacterium E.coli ATCC 25726 (MIC=12 uM). In Odorrana hosii (Hose's rock frog), this protein is Esculentin-1HSa.